Reading from the N-terminus, the 479-residue chain is GTPase Der (479 aa).

EngA-type G domains are found at residues 3–167 and 208–383; these read FKVA…GEAR and MRIA…KVWN. Residues 9–16, 56–60, 119–122, 214–221, 261–265, and 326–329 contribute to the GTP site; these read GRPNVGKS, DTAGF, NKAE, GRPNAGKS, DTAGM, and NKWD. In terms of domain architecture, KH-like spans 384-468; the sequence is SRVSTGKLNR…PIRIALRTSD (85 aa).

It belongs to the TRAFAC class TrmE-Era-EngA-EngB-Septin-like GTPase superfamily. EngA (Der) GTPase family. Associates with the 50S ribosomal subunit.

Its function is as follows. GTPase that plays an essential role in the late steps of ribosome biogenesis. The sequence is that of GTPase Der from Mesorhizobium japonicum (strain LMG 29417 / CECT 9101 / MAFF 303099) (Mesorhizobium loti (strain MAFF 303099)).